A 328-amino-acid chain; its full sequence is Small neutral protease regulatory protein (328 aa).

The HTH lysR-type domain occupies 1–60 (MELEVRHLRALCAIADAGSLHRAARRLGVAQPTLSTQLTRIEQALGGPLFTRERTGCRPT). Positions 20–39 (LHRAARRLGVAQPTLSTQLT) form a DNA-binding region, H-T-H motif.

Belongs to the LysR transcriptional regulatory family.

Its function is as follows. Transcriptional trans-activator of the gene (mprA) for the small neutral protease. The chain is Small neutral protease regulatory protein (mprR) from Streptomyces coelicolor (strain ATCC BAA-471 / A3(2) / M145).